A 461-amino-acid chain; its full sequence is L-seryl-tRNA(Sec) selenium transferase (461 aa).

The residue at position 294 (K294) is an N6-(pyridoxal phosphate)lysine.

The protein belongs to the SelA family. Pyridoxal 5'-phosphate is required as a cofactor.

It localises to the cytoplasm. The enzyme catalyses L-seryl-tRNA(Sec) + selenophosphate + H(+) = L-selenocysteinyl-tRNA(Sec) + phosphate. The protein operates within aminoacyl-tRNA biosynthesis; selenocysteinyl-tRNA(Sec) biosynthesis; selenocysteinyl-tRNA(Sec) from L-seryl-tRNA(Sec) (bacterial route): step 1/1. In terms of biological role, converts seryl-tRNA(Sec) to selenocysteinyl-tRNA(Sec) required for selenoprotein biosynthesis. In Haemophilus influenzae (strain 86-028NP), this protein is L-seryl-tRNA(Sec) selenium transferase.